Here is a 50-residue protein sequence, read N- to C-terminus: Large ribosomal subunit protein bL33B (50 aa).

Belongs to the bacterial ribosomal protein bL33 family.

The protein is Large ribosomal subunit protein bL33B of Ligilactobacillus salivarius (strain UCC118) (Lactobacillus salivarius).